The primary structure comprises 128 residues: MKLFIGLIFCSLVMGVSSDGWFSFFKEAVQGASDLWRAYWDMKEANYQNSGRYFRARGNYEAAQRGPGGIWAAKIISNVGEYFQGLLQYLGSSSEREEDQVSNRRAEEWGRSGQDPDHFRPAGLPKKY.

Positions 1-18 (MKLFIGLIFCSLVMGVSS) are cleaved as a signal peptide. Residues 93–128 (SSEREEDQVSNRRAEEWGRSGQDPDHFRPAGLPKKY) are disordered. Over residues 99-120 (DQVSNRRAEEWGRSGQDPDHFR) the composition is skewed to basic and acidic residues.

Belongs to the SAA family. As to quaternary structure, apolipoprotein of the HDL complex.

The protein resides in the secreted. In terms of biological role, major acute phase reactant. The sequence is that of Serum amyloid A-4 protein from Sus scrofa (Pig).